The primary structure comprises 138 residues: ATP synthase epsilon chain, chloroplastic (138 aa).

Belongs to the ATPase epsilon chain family. As to quaternary structure, F-type ATPases have 2 components, CF(1) - the catalytic core - and CF(0) - the membrane proton channel. CF(1) has five subunits: alpha(3), beta(3), gamma(1), delta(1), epsilon(1). CF(0) has three main subunits: a, b and c.

The protein localises to the plastid. Its subcellular location is the chloroplast thylakoid membrane. Its function is as follows. Produces ATP from ADP in the presence of a proton gradient across the membrane. This chain is ATP synthase epsilon chain, chloroplastic, found in Anthoceros angustus (Hornwort).